The following is a 1653-amino-acid chain: Cortactin-binding protein 2 (1653 aa).

Disordered stretches follow at residues 1–27 (MATDGASCEPDASRAPEEAAGATAEAA), 203–222 (KKKTNELEEELSAEKRRSTE), 268–297 (QLKRGSDSKPSLSLPRKTKDRRSVSISVGT), 314–339 (ESTEHVKKSPLTVPVKPSPGSAKGSV), and 356–609 (HGDL…PSID). Positions 119–276 (RKMQERMSTQ…EQLKRGSDSK (158 aa)) form a coiled coil. A compositionally biased stretch (polar residues) spans 379 to 389 (GPSTGSPPDLT). The segment covering 390–408 (SSAAQSPAAAPHGLPPAHG) has biased composition (low complexity). Polar residues-rich tracts occupy residues 444 to 470 (GNANDPDQNGNTTQSPPSRDVSPTSRD), 478 to 490 (ARNTVTQALSRFT), and 573 to 584 (TVASSPPSSLPQ). Position 488 is an asymmetric dimethylarginine (arginine 488). 5 ANK repeats span residues 700–730 (GRPTLLQQAAAQGNVTLLSMLLNEEGLDINY), 734–763 (DGHSALYSAAKNGHTDCVRLLLNAEAQVNA), 767–796 (NGFTPLCAAAAQGHFECVELLIAYDAHINH), 800–829 (GGQTPLYLACKNGNKECIKLLLEAGTDRSV), and 833–862 (DGWTPVHAAVDTGNVDSLKLLMYHGAPAHG). The interval 860 to 892 (AHGNSLNEEEPESDASDLDEGEESSEGKSKPVV) is disordered. Positions 866-883 (NEEEPESDASDLDEGEES) are enriched in acidic residues. The stretch at 903 to 933 (EGWTAAHIAASKGFKNCLEILCRHRGLEPER) is one ANK 6 repeat. Residues 1441–1472 (ESGAWRKVNTSPRRKSGRFSSPTWNKPDLSNE) are disordered. Residue serine 1514 is modified to Phosphoserine. Residues 1545-1653 (DLRTFDSSGN…KNEHIEKLNK (109 aa)) form a disordered region. 2 stretches are compositionally biased toward polar residues: residues 1549 to 1564 (FDSSGNNPAFSATANN) and 1572 to 1589 (KEVSPLSSHQTTECSNNK). The span at 1614–1628 (SQNTKRSSSSSNTRQ) shows a compositional bias: low complexity. Residues 1635–1653 (SKEENWNLHKNEHIEKLNK) are compositionally biased toward basic and acidic residues.

In terms of assembly, interacts with CTTN/cortactin SH3 domain. Interacts with STRN, STRN4/zinedin and MOB4/phocein; this interactions mediate the association with the STRIPAK core complex and may regulate dendritic spine distribution of the STRIPAK complex in hippocampal neurons. Activation of glutamate receptors weakens the interaction with STRN and STRN4.

The protein resides in the cytoplasm. The protein localises to the cell cortex. Its subcellular location is the cell projection. It is found in the dendritic spine. In terms of biological role, regulates the dendritic spine distribution of CTTN/cortactin in hippocampal neurons, and thus controls dendritic spinogenesis and dendritic spine maintenance. Associates with the striatin-interacting phosphatase and kinase (STRIPAK) core complex to regulate dendritic spine distribution of the STRIPAK complex in hippocampal neurons. The sequence is that of Cortactin-binding protein 2 (CTTNBP2) from Eulemur macaco macaco (Black lemur).